Consider the following 152-residue polypeptide: Protein-export protein SecB (152 aa).

It belongs to the SecB family. In terms of assembly, homotetramer, a dimer of dimers. One homotetramer interacts with 1 SecA dimer.

The protein localises to the cytoplasm. One of the proteins required for the normal export of preproteins out of the cell cytoplasm. It is a molecular chaperone that binds to a subset of precursor proteins, maintaining them in a translocation-competent state. It also specifically binds to its receptor SecA. This Verminephrobacter eiseniae (strain EF01-2) protein is Protein-export protein SecB.